The following is a 360-amino-acid chain: Peptide chain release factor 1 (360 aa).

N5-methylglutamine is present on Q236.

This sequence belongs to the prokaryotic/mitochondrial release factor family. In terms of processing, methylated by PrmC. Methylation increases the termination efficiency of RF1.

The protein resides in the cytoplasm. Its function is as follows. Peptide chain release factor 1 directs the termination of translation in response to the peptide chain termination codons UAG and UAA. The protein is Peptide chain release factor 1 of Limosilactobacillus reuteri subsp. reuteri (strain JCM 1112) (Lactobacillus reuteri).